The sequence spans 112 residues: Ig kappa chain V-II region 2S1.3 (112 aa).

The interval 1-23 is framework-1; it reads DIVMTQAAFSNPVTLGTSASFSC. A disulfide bridge links Cys-23 with Cys-93. A complementarity-determining-1 region spans residues 24-39; that stretch reads RSSKSLQQSKGITYLY. Residues 40–54 form a framework-2 region; sequence WYLQKPGQSPQLLIY. The tract at residues 55–61 is complementarity-determining-2; it reads QMSNLAS. Residues 62 to 93 form a framework-3 region; sequence GVPDRFSGSGSGTDFTLRISRVEAEDVGVYYC. Residues 94 to 102 are complementarity-determining-3; that stretch reads ANLQELPYT. The interval 103 to 112 is framework-4; sequence FGGGTKLEIK.

The sequence is that of Ig kappa chain V-II region 2S1.3 from Mus musculus (Mouse).